The chain runs to 222 residues: Deoxyribose-phosphate aldolase (222 aa).

The Proton donor/acceptor role is filled by Asp90. The active-site Schiff-base intermediate with acetaldehyde is the Lys152. Lys181 serves as the catalytic Proton donor/acceptor.

The protein belongs to the DeoC/FbaB aldolase family. DeoC type 1 subfamily.

It localises to the cytoplasm. It catalyses the reaction 2-deoxy-D-ribose 5-phosphate = D-glyceraldehyde 3-phosphate + acetaldehyde. Its pathway is carbohydrate degradation; 2-deoxy-D-ribose 1-phosphate degradation; D-glyceraldehyde 3-phosphate and acetaldehyde from 2-deoxy-alpha-D-ribose 1-phosphate: step 2/2. In terms of biological role, catalyzes a reversible aldol reaction between acetaldehyde and D-glyceraldehyde 3-phosphate to generate 2-deoxy-D-ribose 5-phosphate. The polypeptide is Deoxyribose-phosphate aldolase (Pectobacterium carotovorum subsp. carotovorum (strain PC1)).